The following is a 708-amino-acid chain: Leukotoxin translocation ATP-binding protein LktB (708 aa).

A Peptidase C39 domain is found at 1-126 (MEANHQRNDL…ACYQGQLILV (126 aa)). The 283-residue stretch at 155 to 437 (FLETLIVSIF…LAQLWQDFQQ (283 aa)) folds into the ABC transmembrane type-1 domain. The next 5 helical transmembrane spans lie at 159-179 (LIVSIFLQIFALITPLFFQVV), 192-212 (LNIITVALAIVIIFEIVLSGL), 270-290 (ALTSVLDLLFSFIFFAVMWYY), 296-316 (LVILGSLPCYILWSIFISPIL), and 389-409 (VMVINLWLGAHLVISGDLSIG). An ABC transporter domain is found at 469–704 (IAFKNIRFRY…SNGLYSYLHQ (236 aa)). 503–510 (GRSGSGKS) is an ATP binding site.

It belongs to the ABC transporter superfamily. Protein-1 exporter (TC 3.A.1.109) family. In terms of assembly, homodimer.

It is found in the cell inner membrane. The catalysed reaction is ATP + H2O + proteinSide 1 = ADP + phosphate + proteinSide 2.. Part of the ABC transporter complex LktBD involved in leukotoxin export. Transmembrane domains (TMD) form a pore in the inner membrane and the ATP-binding domain (NBD) is responsible for energy generation. The protein is Leukotoxin translocation ATP-binding protein LktB (lktB) of Mannheimia glucosida.